A 306-amino-acid polypeptide reads, in one-letter code: UDP-N-acetylenolpyruvoylglucosamine reductase (306 aa).

Residues 33–197 form the FAD-binding PCMH-type domain; sequence TGGEADFYLS…LEAAFTLEPG (165 aa). R176 is an active-site residue. The Proton donor role is filled by S226. E296 is an active-site residue.

Belongs to the MurB family. The cofactor is FAD.

It localises to the cytoplasm. The catalysed reaction is UDP-N-acetyl-alpha-D-muramate + NADP(+) = UDP-N-acetyl-3-O-(1-carboxyvinyl)-alpha-D-glucosamine + NADPH + H(+). Its pathway is cell wall biogenesis; peptidoglycan biosynthesis. Cell wall formation. In Staphylococcus epidermidis (strain ATCC 35984 / DSM 28319 / BCRC 17069 / CCUG 31568 / BM 3577 / RP62A), this protein is UDP-N-acetylenolpyruvoylglucosamine reductase.